The primary structure comprises 187 residues: Threonylcarbamoyl-AMP synthase (187 aa).

In terms of domain architecture, YrdC-like spans N3–R187.

Belongs to the SUA5 family. TsaC subfamily.

It is found in the cytoplasm. It catalyses the reaction L-threonine + hydrogencarbonate + ATP = L-threonylcarbamoyladenylate + diphosphate + H2O. In terms of biological role, required for the formation of a threonylcarbamoyl group on adenosine at position 37 (t(6)A37) in tRNAs that read codons beginning with adenine. Catalyzes the conversion of L-threonine, HCO(3)(-)/CO(2) and ATP to give threonylcarbamoyl-AMP (TC-AMP) as the acyladenylate intermediate, with the release of diphosphate. This is Threonylcarbamoyl-AMP synthase from Riesia pediculicola (strain USDA).